An 85-amino-acid polypeptide reads, in one-letter code: UPF0335 protein Atu3758 (85 aa).

It belongs to the UPF0335 family.

This Agrobacterium fabrum (strain C58 / ATCC 33970) (Agrobacterium tumefaciens (strain C58)) protein is UPF0335 protein Atu3758.